The primary structure comprises 274 residues: UPF0758 protein RHE_CH01848 (274 aa).

The disordered stretch occupies residues 1–37 (MAKGPVATSSDDELPFETEEPVADERSFFGGRPQKPA). Residues 10-22 (SDDELPFETEEPV) are compositionally biased toward acidic residues. The region spanning 152–274 (VLSSWSSVIQ…HVSLKGLKLI (123 aa)) is the MPN domain. Zn(2+) contacts are provided by His-223, His-225, and Asp-236. The JAMM motif signature appears at 223–236 (HNHPSGDPTPSRAD).

The protein belongs to the UPF0758 family.

The chain is UPF0758 protein RHE_CH01848 from Rhizobium etli (strain ATCC 51251 / DSM 11541 / JCM 21823 / NBRC 15573 / CFN 42).